Consider the following 346-residue polypeptide: Small glutamine-rich tetratricopeptide repeat-containing protein 2 (346 aa).

TPR repeat units follow at residues 102–135 (AEDLKMQGNKAMANKDYELAINKYTEAIKVLPTN), 136–169 (AIYYANRAAAHSSLKEYDQAVKDAESAISIDPSY), 170–203 (FRGYSRLGFAKYAQGKPEEALEAYKKVLDIEGDN), and 205–229 (TEAMKRDYESAKKKVEQSLNLEKTV). A disordered region spans residues 219 to 249 (VEQSLNLEKTVPEQSRDADVDASQGASAGGL). A compositionally biased stretch (basic and acidic residues) spans 228 to 237 (TVPEQSRDAD). Thr308 is modified (phosphothreonine). The segment at 325–346 (GNLFGGAGAQSTDETPDNENKQ) is disordered.

The protein belongs to the SGT family. In terms of assembly, interacts with HSC82, HSP104, MDY2, SSA1 and SSA2.

Its subcellular location is the cytoplasm. Co-chaperone that binds to the molecular chaperone Hsp70 (SSA1 and SSA2). Regulates Hsp70 ATPase activity. Required for recovery from heat shock. This Saccharomyces cerevisiae (strain ATCC 204508 / S288c) (Baker's yeast) protein is Small glutamine-rich tetratricopeptide repeat-containing protein 2 (SGT2).